The chain runs to 180 residues: Oligoribonuclease (180 aa).

Residues 7–170 (LIWIDLEMTG…DDIRESIAEL (164 aa)) enclose the Exonuclease domain. The active site involves Tyr-128.

It belongs to the oligoribonuclease family.

The protein resides in the cytoplasm. In terms of biological role, 3'-to-5' exoribonuclease specific for small oligoribonucleotides. The protein is Oligoribonuclease of Ectopseudomonas mendocina (strain ymp) (Pseudomonas mendocina).